A 284-amino-acid polypeptide reads, in one-letter code: 2-dehydro-3-deoxyphosphooctonate aldolase (284 aa).

It belongs to the KdsA family.

It is found in the cytoplasm. It carries out the reaction D-arabinose 5-phosphate + phosphoenolpyruvate + H2O = 3-deoxy-alpha-D-manno-2-octulosonate-8-phosphate + phosphate. It participates in carbohydrate biosynthesis; 3-deoxy-D-manno-octulosonate biosynthesis; 3-deoxy-D-manno-octulosonate from D-ribulose 5-phosphate: step 2/3. It functions in the pathway bacterial outer membrane biogenesis; lipopolysaccharide biosynthesis. This Escherichia coli O157:H7 protein is 2-dehydro-3-deoxyphosphooctonate aldolase.